We begin with the raw amino-acid sequence, 261 residues long: MSFTVVIPARYASTRLPGKPLAMIAGKPMIQHVCERANESRASRVVVATDDARIEEACRGFGAEVIMTSPNHASGTDRLEEVARKLQLDPDHRVVNVQGDEPLIPPELINQVADNLEQYQEAAIATLCERIHDARQVFNPNVVKVVFDARGMAHYFSRAPIPWARDFWPAGAATQDVDLPDGIGYFRHIGIYGYRASVLSEFVTWLPAPTERVESLEQLRALYNGALIHVDVADRPPAPGVDTEEDLARLRALMEKGGARG.

Belongs to the KdsB family.

It localises to the cytoplasm. The catalysed reaction is 3-deoxy-alpha-D-manno-oct-2-ulosonate + CTP = CMP-3-deoxy-beta-D-manno-octulosonate + diphosphate. Its pathway is nucleotide-sugar biosynthesis; CMP-3-deoxy-D-manno-octulosonate biosynthesis; CMP-3-deoxy-D-manno-octulosonate from 3-deoxy-D-manno-octulosonate and CTP: step 1/1. The protein operates within bacterial outer membrane biogenesis; lipopolysaccharide biosynthesis. In terms of biological role, activates KDO (a required 8-carbon sugar) for incorporation into bacterial lipopolysaccharide in Gram-negative bacteria. This is 3-deoxy-manno-octulosonate cytidylyltransferase from Marinobacter nauticus (strain ATCC 700491 / DSM 11845 / VT8) (Marinobacter aquaeolei).